The following is a 224-amino-acid chain: Thymidylate kinase (224 aa).

13 to 20 contacts ATP; the sequence is GGEGAGKS.

The protein belongs to the thymidylate kinase family.

It carries out the reaction dTMP + ATP = dTDP + ADP. Functionally, phosphorylation of dTMP to form dTDP in both de novo and salvage pathways of dTTP synthesis. In Agrobacterium fabrum (strain C58 / ATCC 33970) (Agrobacterium tumefaciens (strain C58)), this protein is Thymidylate kinase.